We begin with the raw amino-acid sequence, 450 residues long: UDP-N-acetylmuramoylalanine--D-glutamate ligase (450 aa).

An ATP-binding site is contributed by G119–T125.

It belongs to the MurCDEF family.

It localises to the cytoplasm. The catalysed reaction is UDP-N-acetyl-alpha-D-muramoyl-L-alanine + D-glutamate + ATP = UDP-N-acetyl-alpha-D-muramoyl-L-alanyl-D-glutamate + ADP + phosphate + H(+). It participates in cell wall biogenesis; peptidoglycan biosynthesis. Cell wall formation. Catalyzes the addition of glutamate to the nucleotide precursor UDP-N-acetylmuramoyl-L-alanine (UMA). In Streptococcus thermophilus (strain CNRZ 1066), this protein is UDP-N-acetylmuramoylalanine--D-glutamate ligase.